The primary structure comprises 186 residues: Ribosome-recycling factor (186 aa).

Positions 135-156 are disordered; sequence DANDEVKKLQKDKAVSEDEGKK.

This sequence belongs to the RRF family.

Its subcellular location is the cytoplasm. Its function is as follows. Responsible for the release of ribosomes from messenger RNA at the termination of protein biosynthesis. May increase the efficiency of translation by recycling ribosomes from one round of translation to another. This is Ribosome-recycling factor from Bdellovibrio bacteriovorus (strain ATCC 15356 / DSM 50701 / NCIMB 9529 / HD100).